The following is a 545-amino-acid chain: MSEFLRIAMAQFDFPVGAVAQNAERIIALIEQARDEHGADVVMFPELALSGYPPEDLLLRPGFLAHCQVAIERIAAATHGIVAVVGWPQSAGSVVYNVASVLCDGQVEQTYRKRELPNYAVFDERRYFEVDPNGSRCVFKVKGVPVGVLICEDLWFSEPLADTVCGGAELVLVPNASPYERGKHAQRDALLAERARETGAAIAYLNVVGGQDALVFDGASVVVDGHGRVHPAAAAFSDQWLVVDYMRSERRFVPLQWVAESEVSINALVWRAVVRGVQDYCRKNGFSKVWVGLSGGIDSALVLAIAVDALGADQVTAVRLPSRYTAELSNDLAAEQCHSLGVRLETVAIEPVFEGLLAALGPLFAGMAPDATEENLQSRSRGVILMALANKFGGLLLTTGNKSEYAVGYATIYGDMCGGYAPLKDIYKSQVFELAQWRNTVSDVLAIPPGVIHRPPSAELRAQQTDQDSLPPYEVLDGILSLYVDQEQSREDIIAAGYAAGVVDYVLNLVKINEWKRHQAAPGPKVSQRAFGRERRYPISNAYRG.

The CN hydrolase domain occupies 5–247 (LRIAMAQFDF…DQWLVVDYMR (243 aa)). The active-site Proton acceptor; for glutaminase activity is Glu46. The For glutaminase activity role is filled by Lys113. Tyr119 provides a ligand contact to L-glutamine. The active-site Nucleophile; for glutaminase activity is Cys151. L-glutamine contacts are provided by Ser177 and Lys183. Positions 269–545 (VWRAVVRGVQ…RYPISNAYRG (277 aa)) are ligase. 292–299 (GLSGGIDS) lines the ATP pocket. Asn375 contacts deamido-NAD(+). Residue Thr399 participates in ATP binding. The deamido-NAD(+) site is built by Glu404 and Lys516.

In the C-terminal section; belongs to the NAD synthetase family.

It catalyses the reaction deamido-NAD(+) + L-glutamine + ATP + H2O = L-glutamate + AMP + diphosphate + NAD(+) + H(+). It participates in cofactor biosynthesis; NAD(+) biosynthesis; NAD(+) from deamido-NAD(+) (L-Gln route): step 1/1. Functionally, catalyzes the ATP-dependent amidation of deamido-NAD to form NAD. Uses L-glutamine as a nitrogen source. This Xylella fastidiosa (strain 9a5c) protein is Glutamine-dependent NAD(+) synthetase.